A 395-amino-acid polypeptide reads, in one-letter code: Argininosuccinate synthase (395 aa).

7 to 15 lines the ATP pocket; sequence LYSGGLDTS. Y83 contacts L-citrulline. G113 serves as a coordination point for ATP. L-aspartate contacts are provided by T115, N119, and D120. N119 provides a ligand contact to L-citrulline. Residues R123, S169, S178, E253, and Y265 each coordinate L-citrulline.

It belongs to the argininosuccinate synthase family. Type 1 subfamily. As to quaternary structure, homotetramer.

The protein localises to the cytoplasm. It carries out the reaction L-citrulline + L-aspartate + ATP = 2-(N(omega)-L-arginino)succinate + AMP + diphosphate + H(+). The protein operates within amino-acid biosynthesis; L-arginine biosynthesis; L-arginine from L-ornithine and carbamoyl phosphate: step 2/3. The polypeptide is Argininosuccinate synthase (Picrophilus torridus (strain ATCC 700027 / DSM 9790 / JCM 10055 / NBRC 100828 / KAW 2/3)).